The primary structure comprises 131 residues: Metalloproteinase inhibitor (131 aa).

A signal peptide spans 1–29 (MVRKRALGLAGSALTLVLGAVGFTAPAQA). 2 disulfides stabilise this stretch: Cys-33–Cys-39 and Cys-93–Cys-98.

Functionally, inhibits microbial metallo-proteinases, such as thermolysin, but not serine, thiol, or carboxyl proteinases. This Streptomyces nigrescens protein is Metalloproteinase inhibitor (smpI).